Here is a 628-residue protein sequence, read N- to C-terminus: Alpha pinene synthase, chloroplastic (628 aa).

A chloroplast-targeting transit peptide spans 1–46 (MSLGCITPLASAMVGPKLVRPLIHHNPLFHHKPLNRPYLQTKIPLR). Positions 381, 385, and 532 each coordinate Mg(2+). A DDXXD motif motif is present at residues 381–385 (DDMYD).

The protein belongs to the terpene synthase family. Tpsa subfamily. Mg(2+) is required as a cofactor. Requires Mn(2+) as cofactor.

It is found in the plastid. It localises to the chloroplast. It carries out the reaction (2E)-geranyl diphosphate = alpha-pinene + diphosphate. It functions in the pathway secondary metabolite biosynthesis; terpenoid biosynthesis. Functionally, monoterpene synthase involved in the biosynthesis of volatile compounds. Mediates the conversion of (2E)-geranyl diphosphate (GPP) into alpha-pinene. The polypeptide is Alpha pinene synthase, chloroplastic (Chamaecyparis formosensis (Formosan cypress)).